A 206-amino-acid polypeptide reads, in one-letter code: Isochorismatase family protein 1A (206 aa).

The protein belongs to the isochorismatase family.

The chain is Isochorismatase family protein 1A from Dictyostelium discoideum (Social amoeba).